A 328-amino-acid polypeptide reads, in one-letter code: Glycerol-3-phosphate dehydrogenase [NAD(P)+] (328 aa).

Positions 11, 30, and 103 each coordinate NADPH. Sn-glycerol 3-phosphate-binding residues include K103, G132, and S134. Residue A136 participates in NADPH binding. Residues K187, D240, S250, R251, and N252 each contribute to the sn-glycerol 3-phosphate site. The active-site Proton acceptor is K187. Residue R251 participates in NADPH binding. V275 and E277 together coordinate NADPH.

Belongs to the NAD-dependent glycerol-3-phosphate dehydrogenase family.

Its subcellular location is the cytoplasm. It catalyses the reaction sn-glycerol 3-phosphate + NAD(+) = dihydroxyacetone phosphate + NADH + H(+). The enzyme catalyses sn-glycerol 3-phosphate + NADP(+) = dihydroxyacetone phosphate + NADPH + H(+). Its pathway is membrane lipid metabolism; glycerophospholipid metabolism. In terms of biological role, catalyzes the reduction of the glycolytic intermediate dihydroxyacetone phosphate (DHAP) to sn-glycerol 3-phosphate (G3P), the key precursor for phospholipid synthesis. This chain is Glycerol-3-phosphate dehydrogenase [NAD(P)+], found in Thiobacillus denitrificans (strain ATCC 25259 / T1).